Consider the following 490-residue polypeptide: Ent-kaurenoic acid oxidase 1 (490 aa).

Residues 6–26 (SWIPVWFPLMVLGCFGLNWLV) form a helical membrane-spanning segment. C439 serves as a coordination point for heme.

Belongs to the cytochrome P450 family. It depends on heme as a cofactor. As to expression, widely expressed. Highly expressed in influorescence stem, influorescence, and silique tissue. Weakly expressed in cauline and rosette leaves. Expressed at a higher level in stem and influorescence than AtKAO2/CYP88A4.

The protein resides in the endoplasmic reticulum membrane. The enzyme catalyses ent-kaur-16-en-19-oate + 3 reduced [NADPH--hemoprotein reductase] + 3 O2 = gibberellin A12 + 3 oxidized [NADPH--hemoprotein reductase] + 4 H2O + 4 H(+). It catalyses the reaction ent-kaur-16-en-19-oate + reduced [NADPH--hemoprotein reductase] + O2 = ent-7alpha-hydroxykaur-16-en-19-oate + oxidized [NADPH--hemoprotein reductase] + H2O + H(+). The catalysed reaction is ent-7alpha-hydroxykaur-16-en-19-oate + reduced [NADPH--hemoprotein reductase] + O2 = gibberellin A12 aldehyde + oxidized [NADPH--hemoprotein reductase] + 2 H2O + H(+). It carries out the reaction gibberellin A12 aldehyde + reduced [NADPH--hemoprotein reductase] + O2 = gibberellin A12 + oxidized [NADPH--hemoprotein reductase] + H2O + 2 H(+). Its pathway is plant hormone biosynthesis; gibberellin biosynthesis. Functionally, catalyzes three successive oxidations of ent-kaurenoic acid giving gibberellin 12 (GA12), a key step in gibberellins (GAs) biosynthesis. GAs, which are involved many processes, including stem elongation, play a central role in plant development. This chain is Ent-kaurenoic acid oxidase 1, found in Arabidopsis thaliana (Mouse-ear cress).